The following is a 164-amino-acid chain: Protein-export protein SecB (164 aa).

This sequence belongs to the SecB family. Homotetramer, a dimer of dimers. One homotetramer interacts with 1 SecA dimer.

The protein localises to the cytoplasm. In terms of biological role, one of the proteins required for the normal export of preproteins out of the cell cytoplasm. It is a molecular chaperone that binds to a subset of precursor proteins, maintaining them in a translocation-competent state. It also specifically binds to its receptor SecA. In Caulobacter sp. (strain K31), this protein is Protein-export protein SecB.